The following is a 364-amino-acid chain: 3-isopropylmalate dehydrogenase (364 aa).

NAD(+) is bound at residue 78 to 91 (GKKWDYLSIDKRPE). The substrate site is built by arginine 99, arginine 109, arginine 138, and aspartate 227. Mg(2+) contacts are provided by aspartate 227, aspartate 251, and aspartate 255. 285 to 297 (GSAPDIAGKNIAN) contributes to the NAD(+) binding site.

The protein belongs to the isocitrate and isopropylmalate dehydrogenases family. LeuB type 1 subfamily. In terms of assembly, homodimer. The cofactor is Mg(2+). Mn(2+) is required as a cofactor.

The protein localises to the cytoplasm. The catalysed reaction is (2R,3S)-3-isopropylmalate + NAD(+) = 4-methyl-2-oxopentanoate + CO2 + NADH. It participates in amino-acid biosynthesis; L-leucine biosynthesis; L-leucine from 3-methyl-2-oxobutanoate: step 3/4. Catalyzes the oxidation of 3-carboxy-2-hydroxy-4-methylpentanoate (3-isopropylmalate) to 3-carboxy-4-methyl-2-oxopentanoate. The product decarboxylates to 4-methyl-2 oxopentanoate. The sequence is that of 3-isopropylmalate dehydrogenase from Buchnera aphidicola subsp. Uroleucon erigeronensis.